Reading from the N-terminus, the 138-residue chain is Basic phospholipase A2 homolog Ts-K49a (138 aa).

The first 16 residues, 1-16, serve as a signal peptide directing secretion; it reads MRTLWIMAVLLLGVEG. Disulfide bonds link cysteine 42–cysteine 131, cysteine 44–cysteine 60, cysteine 59–cysteine 111, cysteine 65–cysteine 138, cysteine 66–cysteine 104, cysteine 73–cysteine 97, and cysteine 91–cysteine 102. The interval 121–133 is important for membrane-damaging activities in eukaryotes and bacteria; heparin-binding; that stretch reads KKKKINLKLFCKK.

In terms of tissue distribution, expressed by the venom gland.

It is found in the secreted. Snake venom phospholipase A2 homolog that lacks catalytic activity. It shows myotoxic and weak anticoagulant activities and induces local edema a few hours after injection (5-10 ug) in the hind paw. A model of myotoxic mechanism has been proposed: an apo Lys49-PLA2 is activated by the entrance of a hydrophobic molecule (e.g. fatty acid) at the hydrophobic channel of the protein leading to a reorientation of a monomer. This reorientation causes a transition between 'inactive' to 'active' states, causing alignment of C-terminal and membrane-docking sites (MDoS) side-by-side and putting the membrane-disruption sites (MDiS) in the same plane, exposed to solvent and in a symmetric position for both monomers. The MDoS region stabilizes the toxin on membrane by the interaction of charged residues with phospholipid head groups. Subsequently, the MDiS region destabilizes the membrane with penetration of hydrophobic residues. This insertion causes a disorganization of the membrane, allowing an uncontrolled influx of ions (i.e. calcium and sodium), and eventually triggering irreversible intracellular alterations and cell death. This Trimeresurus stejnegeri (Chinese green tree viper) protein is Basic phospholipase A2 homolog Ts-K49a.